A 579-amino-acid chain; its full sequence is Glypican-2 (579 aa).

A signal peptide spans Met1 to Gly23. O-linked (Xyl...) (heparan sulfate) serine glycans are attached at residues Ser55, Ser92, and Ser155. 2 disordered regions span residues Gly444–Arg468 and Ala485–Gly555. 2 O-linked (Xyl...) (heparan sulfate) serine glycosylation sites follow: Ser500 and Ser502. Over residues Pro520–Pro529 the composition is skewed to pro residues. Gly554 carries the GPI-anchor amidated glycine lipid modification. The propeptide at Gly555 to Arg579 is removed in mature form.

This sequence belongs to the glypican family. As to quaternary structure, interacts (via heparan sulfate) with PTN; this interaction promotes neurite outgrowth through binding of PTN with chondroitin sulfate of proteoglycans, thereby releasing PTPRS of chondroitin sulfate proteoglycans (CSPGs) and leading to binding with heparan sulfate of GPC2. Interacts (heparan sulfate chain) with MDK; this interaction is inhibited by heparin followed by chondroitin sulfate E; this interaction induces GPC2 clustering through heparan sulfate chain; this interaction induces neuronal cell adhesion and neurite outgrowth.

Its subcellular location is the cell membrane. The protein resides in the secreted. It localises to the extracellular space. Cell surface proteoglycan that bears heparan sulfate. May fulfill a function related to the motile behaviors of developing neurons. This is Glypican-2 (GPC2) from Homo sapiens (Human).